The following is a 442-amino-acid chain: Enolase 1 (442 aa).

The binds human collagen stretch occupies residues 73–140 (KLIAKEIVGY…YNYLGGFNAH (68 aa)). Gln163 is a binding site for (2R)-2-phosphoglycerate. The active-site Proton donor is the Glu205. Residues Asp242, Glu290, and Asp317 each contribute to the Mg(2+) site. 4 residues coordinate (2R)-2-phosphoglycerate: Lys342, Arg371, Ser372, and Lys393. Lys342 serves as the catalytic Proton acceptor.

The protein belongs to the enolase family. Mg(2+) is required as a cofactor.

It is found in the cytoplasm. It localises to the secreted. The protein resides in the cell surface. The catalysed reaction is (2R)-2-phosphoglycerate = phosphoenolpyruvate + H2O. The protein operates within carbohydrate degradation; glycolysis; pyruvate from D-glyceraldehyde 3-phosphate: step 4/5. Catalyzes the reversible conversion of 2-phosphoglycerate (2-PG) into phosphoenolpyruvate (PEP). It is essential for the degradation of carbohydrates via glycolysis. Functionally, 'Moonlights' as a collagen receptor. Binds host (human) collagen, which may contribute to pathogenicity. The sequence is that of Enolase 1 from Lactiplantibacillus plantarum (strain ATCC BAA-793 / NCIMB 8826 / WCFS1) (Lactobacillus plantarum).